Reading from the N-terminus, the 356-residue chain is tRNA N6-adenosine threonylcarbamoyltransferase (356 aa).

Fe cation contacts are provided by His115 and His119. Substrate is bound by residues 138–142 (LVSGG), Asp171, Gly184, and Asn283. A Fe cation-binding site is contributed by Asp311.

The protein belongs to the KAE1 / TsaD family. Fe(2+) serves as cofactor.

The protein localises to the cytoplasm. The catalysed reaction is L-threonylcarbamoyladenylate + adenosine(37) in tRNA = N(6)-L-threonylcarbamoyladenosine(37) in tRNA + AMP + H(+). Its function is as follows. Required for the formation of a threonylcarbamoyl group on adenosine at position 37 (t(6)A37) in tRNAs that read codons beginning with adenine. Is involved in the transfer of the threonylcarbamoyl moiety of threonylcarbamoyl-AMP (TC-AMP) to the N6 group of A37, together with TsaE and TsaB. TsaD likely plays a direct catalytic role in this reaction. This chain is tRNA N6-adenosine threonylcarbamoyltransferase, found in Prochlorococcus marinus (strain MIT 9215).